The primary structure comprises 227 residues: Cytidylate kinase (227 aa).

12–20 (GPSGAGKGT) contributes to the ATP binding site.

Belongs to the cytidylate kinase family. Type 1 subfamily.

It is found in the cytoplasm. The catalysed reaction is CMP + ATP = CDP + ADP. It carries out the reaction dCMP + ATP = dCDP + ADP. The polypeptide is Cytidylate kinase (Shigella boydii serotype 4 (strain Sb227)).